Reading from the N-terminus, the 351-residue chain is 4-hydroxy-3-methylbut-2-enyl diphosphate reductase (351 aa).

C18 serves as a coordination point for [4Fe-4S] cluster. Positions 47 and 83 each coordinate (2E)-4-hydroxy-3-methylbut-2-enyl diphosphate. H47 and H83 together coordinate dimethylallyl diphosphate. H47 and H83 together coordinate isopentenyl diphosphate. C105 contributes to the [4Fe-4S] cluster binding site. H133 lines the (2E)-4-hydroxy-3-methylbut-2-enyl diphosphate pocket. H133 provides a ligand contact to dimethylallyl diphosphate. H133 contacts isopentenyl diphosphate. Catalysis depends on E135, which acts as the Proton donor. Position 174 (T174) interacts with (2E)-4-hydroxy-3-methylbut-2-enyl diphosphate. C204 contributes to the [4Fe-4S] cluster binding site. (2E)-4-hydroxy-3-methylbut-2-enyl diphosphate is bound by residues S232, S233, N234, and S277. Dimethylallyl diphosphate contacts are provided by S232, S233, N234, and S277. Residues S232, S233, N234, and S277 each contribute to the isopentenyl diphosphate site.

Belongs to the IspH family. [4Fe-4S] cluster is required as a cofactor.

It catalyses the reaction isopentenyl diphosphate + 2 oxidized [2Fe-2S]-[ferredoxin] + H2O = (2E)-4-hydroxy-3-methylbut-2-enyl diphosphate + 2 reduced [2Fe-2S]-[ferredoxin] + 2 H(+). The catalysed reaction is dimethylallyl diphosphate + 2 oxidized [2Fe-2S]-[ferredoxin] + H2O = (2E)-4-hydroxy-3-methylbut-2-enyl diphosphate + 2 reduced [2Fe-2S]-[ferredoxin] + 2 H(+). It functions in the pathway isoprenoid biosynthesis; dimethylallyl diphosphate biosynthesis; dimethylallyl diphosphate from (2E)-4-hydroxy-3-methylbutenyl diphosphate: step 1/1. Its pathway is isoprenoid biosynthesis; isopentenyl diphosphate biosynthesis via DXP pathway; isopentenyl diphosphate from 1-deoxy-D-xylulose 5-phosphate: step 6/6. Catalyzes the conversion of 1-hydroxy-2-methyl-2-(E)-butenyl 4-diphosphate (HMBPP) into a mixture of isopentenyl diphosphate (IPP) and dimethylallyl diphosphate (DMAPP). Acts in the terminal step of the DOXP/MEP pathway for isoprenoid precursor biosynthesis. The sequence is that of 4-hydroxy-3-methylbut-2-enyl diphosphate reductase from Bartonella tribocorum (strain CIP 105476 / IBS 506).